The following is a 269-amino-acid chain: Intercellular adhesion molecule 4 (269 aa).

An N-terminal signal peptide occupies residues 1-20; the sequence is SLFPLSLLFFLAAAYPGVGS. The Extracellular segment spans residues 21 to 238; it reads ALGRRTKRAQ…MLAWSSAPTA (218 aa). 2 consecutive Ig-like C2-type domains span residues 60-122 and 144-215; these read GKSV…TRWA and GRKY…LNLD. N-linked (GlcNAc...) asparagine glycans are attached at residues asparagine 66, asparagine 76, asparagine 188, and asparagine 221. 4 disulfides stabilise this stretch: cysteine 67/cysteine 111, cysteine 67/cysteine 115, cysteine 71/cysteine 115, and cysteine 151/cysteine 208. The chain crosses the membrane as a helical span at residues 239–259; sequence LASVSIAALVGILLTVGAAYL. Over 260–269 the chain is Cytoplasmic; the sequence is CKCLAMKSQA.

It belongs to the immunoglobulin superfamily. ICAM family. In terms of processing, N- and O-glycosylated.

It localises to the cell membrane. ICAM proteins are ligands for the leukocyte adhesion protein LFA-1 (integrin alpha-L/beta-2). ICAM4 is also a ligand for alpha-4/beta-1 and alpha-V integrins. In Pan troglodytes (Chimpanzee), this protein is Intercellular adhesion molecule 4 (ICAM4).